We begin with the raw amino-acid sequence, 390 residues long: Phosphopentomutase (390 aa).

Residues aspartate 9, aspartate 283, histidine 288, aspartate 324, histidine 325, and histidine 336 each coordinate Mn(2+).

The protein belongs to the phosphopentomutase family. Requires Mn(2+) as cofactor.

It localises to the cytoplasm. It carries out the reaction 2-deoxy-alpha-D-ribose 1-phosphate = 2-deoxy-D-ribose 5-phosphate. The enzyme catalyses alpha-D-ribose 1-phosphate = D-ribose 5-phosphate. The protein operates within carbohydrate degradation; 2-deoxy-D-ribose 1-phosphate degradation; D-glyceraldehyde 3-phosphate and acetaldehyde from 2-deoxy-alpha-D-ribose 1-phosphate: step 1/2. Isomerase that catalyzes the conversion of deoxy-ribose 1-phosphate (dRib-1-P) and ribose 1-phosphate (Rib-1-P) to deoxy-ribose 5-phosphate (dRib-5-P) and ribose 5-phosphate (Rib-5-P), respectively. This Thermotoga maritima (strain ATCC 43589 / DSM 3109 / JCM 10099 / NBRC 100826 / MSB8) protein is Phosphopentomutase.